We begin with the raw amino-acid sequence, 279 residues long: Large ribosomal subunit protein uL2 (279 aa).

Positions 224-279 (AMNAVDHPMGGGRGHSKGGNIPRSPWNQPSRGLKTRPKKSWDWMIVSDRRKNKAGK) are disordered.

It belongs to the universal ribosomal protein uL2 family. In terms of assembly, part of the 50S ribosomal subunit. Forms a bridge to the 30S subunit in the 70S ribosome.

One of the primary rRNA binding proteins. Required for association of the 30S and 50S subunits to form the 70S ribosome, for tRNA binding and peptide bond formation. It has been suggested to have peptidyltransferase activity; this is somewhat controversial. Makes several contacts with the 16S rRNA in the 70S ribosome. This Elusimicrobium minutum (strain Pei191) protein is Large ribosomal subunit protein uL2.